A 191-amino-acid polypeptide reads, in one-letter code: LOB domain-containing protein 19 (191 aa).

The region spanning 15–117 (GPCGACKFLR…AELAHVQARL (103 aa)) is the LOB domain.

The protein belongs to the LOB domain-containing protein family. Expressed in shoots, roots and floral tissues, but not in stems or leaves.

This is LOB domain-containing protein 19 (LBD19) from Arabidopsis thaliana (Mouse-ear cress).